A 561-amino-acid polypeptide reads, in one-letter code: Methionine--tRNA ligase (561 aa).

The short motif at 11-21 (PYVNTVPHLGN) is the 'HIGH' region element. Positions 143, 146, 156, and 159 each coordinate Zn(2+). Position 334 (K334) interacts with ATP.

It belongs to the class-I aminoacyl-tRNA synthetase family. MetG type 1 subfamily. The cofactor is Zn(2+).

The protein localises to the cytoplasm. The enzyme catalyses tRNA(Met) + L-methionine + ATP = L-methionyl-tRNA(Met) + AMP + diphosphate. Is required not only for elongation of protein synthesis but also for the initiation of all mRNA translation through initiator tRNA(fMet) aminoacylation. The chain is Methionine--tRNA ligase from Ignicoccus hospitalis (strain KIN4/I / DSM 18386 / JCM 14125).